Reading from the N-terminus, the 159-residue chain is UPF0262 protein Dshi_0980 (159 aa).

It belongs to the UPF0262 family.

The protein is UPF0262 protein Dshi_0980 of Dinoroseobacter shibae (strain DSM 16493 / NCIMB 14021 / DFL 12).